Consider the following 453-residue polypeptide: uncharacterized protein (453 aa).

Positions 74, 80, 83, and 162 each coordinate [4Fe-4S] cluster. S-adenosyl-L-methionine is bound by residues glutamine 286, tyrosine 315, glutamate 336, and aspartate 384. The active-site Nucleophile is the cysteine 411.

It belongs to the class I-like SAM-binding methyltransferase superfamily. RNA M5U methyltransferase family.

This is an uncharacterized protein from Staphylococcus aureus (strain Mu50 / ATCC 700699).